We begin with the raw amino-acid sequence, 463 residues long: ATP-dependent protease ATPase subunit HslU (463 aa).

Residues Ile19, 61–66, Asp277, Glu341, and Arg413 each bind ATP; that span reads GVGKTE.

It belongs to the ClpX chaperone family. HslU subfamily. A double ring-shaped homohexamer of HslV is capped on each side by a ring-shaped HslU homohexamer. The assembly of the HslU/HslV complex is dependent on binding of ATP.

It localises to the cytoplasm. In terms of biological role, ATPase subunit of a proteasome-like degradation complex; this subunit has chaperone activity. The binding of ATP and its subsequent hydrolysis by HslU are essential for unfolding of protein substrates subsequently hydrolyzed by HslV. HslU recognizes the N-terminal part of its protein substrates and unfolds these before they are guided to HslV for hydrolysis. The protein is ATP-dependent protease ATPase subunit HslU of Bacillus cereus (strain B4264).